Reading from the N-terminus, the 312-residue chain is Retinol dehydrogenase 8 (312 aa).

9–18 (LISGCSSGIG) contacts NADP(+). The next 3 helical transmembrane spans lie at 87–107 (VLVN…SLAA), 138–158 (IVVV…VYAA), and 170–190 (LAVQ…GPVV). A substrate-binding site is contributed by Ser-143. The Proton acceptor role is filled by Tyr-156.

Belongs to the short-chain dehydrogenases/reductases (SDR) family. Detected in photoreceptor outer segments in the retina (at protein level).

Its subcellular location is the membrane. The enzyme catalyses all-trans-retinol + NADP(+) = all-trans-retinal + NADPH + H(+). Its function is as follows. Retinol dehydrogenase with a clear preference for NADP. Converts all-trans-retinal to all-trans-retinol. May play a role in the regeneration of visual pigment at high light intensity. The polypeptide is Retinol dehydrogenase 8 (RDH8) (Bos taurus (Bovine)).